We begin with the raw amino-acid sequence, 432 residues long: Histidinol dehydrogenase (432 aa).

Positions 133, 194, and 217 each coordinate NAD(+). Residues S240, Q262, and H265 each contribute to the substrate site. Positions 262 and 265 each coordinate Zn(2+). Catalysis depends on proton acceptor residues E330 and H331. Substrate contacts are provided by H331, D364, E418, and H423. D364 lines the Zn(2+) pocket. H423 is a Zn(2+) binding site.

It belongs to the histidinol dehydrogenase family. Requires Zn(2+) as cofactor.

It carries out the reaction L-histidinol + 2 NAD(+) + H2O = L-histidine + 2 NADH + 3 H(+). It functions in the pathway amino-acid biosynthesis; L-histidine biosynthesis; L-histidine from 5-phospho-alpha-D-ribose 1-diphosphate: step 9/9. Functionally, catalyzes the sequential NAD-dependent oxidations of L-histidinol to L-histidinaldehyde and then to L-histidine. This is Histidinol dehydrogenase from Nitrosomonas europaea (strain ATCC 19718 / CIP 103999 / KCTC 2705 / NBRC 14298).